A 274-amino-acid chain; its full sequence is MRKSMISFLEKKAKNEKITMVSAYDYHSAKILDNCDIDIILVGDSLAMTVLGMQDTLSVTMDEMLIFTKAVSRGAKKSFVLADMPFMSYQSSDRDAILNASRFIKESHANGVKVEGGIEIASKIKLISQSGIPVVAHLGLTPQAVNMLGGYRVQGKDLQSAQKIIDDAKAVQDAGACMLVVECVPVKLAQKISSILEIPTIGIGSGKYCDGQVLVYHDLLGLNKDFKAKFVKHFDKIDPQVGVEKYRDEVKSGIFPSQEHSFDYLDDELLDKLY.

Residues Asp-44 and Asp-83 each contribute to the Mg(2+) site. 3-methyl-2-oxobutanoate-binding positions include Asp-44 to Ser-45, Asp-83, and Lys-113. Residue Glu-115 coordinates Mg(2+). Glu-182 (proton acceptor) is an active-site residue.

The protein belongs to the PanB family. As to quaternary structure, homodecamer; pentamer of dimers. The cofactor is Mg(2+).

Its subcellular location is the cytoplasm. The catalysed reaction is 3-methyl-2-oxobutanoate + (6R)-5,10-methylene-5,6,7,8-tetrahydrofolate + H2O = 2-dehydropantoate + (6S)-5,6,7,8-tetrahydrofolate. The protein operates within cofactor biosynthesis; (R)-pantothenate biosynthesis; (R)-pantoate from 3-methyl-2-oxobutanoate: step 1/2. Functionally, catalyzes the reversible reaction in which hydroxymethyl group from 5,10-methylenetetrahydrofolate is transferred onto alpha-ketoisovalerate to form ketopantoate. The chain is 3-methyl-2-oxobutanoate hydroxymethyltransferase from Campylobacter jejuni subsp. jejuni serotype O:23/36 (strain 81-176).